A 255-amino-acid polypeptide reads, in one-letter code: Indole-3-glycerol phosphate synthase (255 aa).

Belongs to the TrpC family.

It carries out the reaction 1-(2-carboxyphenylamino)-1-deoxy-D-ribulose 5-phosphate + H(+) = (1S,2R)-1-C-(indol-3-yl)glycerol 3-phosphate + CO2 + H2O. Its pathway is amino-acid biosynthesis; L-tryptophan biosynthesis; L-tryptophan from chorismate: step 4/5. The chain is Indole-3-glycerol phosphate synthase from Streptococcus pneumoniae (strain Hungary19A-6).